The sequence spans 350 residues: Serine-threonine kinase receptor-associated protein (350 aa).

WD repeat units lie at residues 12-56 (GHTR…GTFL), 57-96 (GHKGAVWGATLNKDATKAATAAADFTAKVWDAVSGDELIT), 98-137 (AHKHIVKSVDFTQDSNYLLTGGQDKLLRIYDLSKPEAEPD), 141-179 (GHTSGIKKALWSSDDKQILSADDKTVRLWDRSTMTEVKA), 180-212 (LNVAMSVSSMEYVPEGQILVITYGKTIAFHSAE), 221-262 (EAPA…ESYK), and 263-302 (GHFGPIHCVRFSPDGELYASGSEDGTLRLWQTTVGKTYGL). Residues 311-350 (ENAEAAKARTTLPGTAEEEIEEVASENSDSVYSSTPEVKA) are disordered. The span at 335–350 (SENSDSVYSSTPEVKA) shows a compositional bias: polar residues.

The protein belongs to the WD repeat STRAP family. In terms of assembly, part of the core SMN complex.

Its subcellular location is the cytoplasm. The protein localises to the nucleus. Functionally, the SMN complex catalyzes the assembly of small nuclear ribonucleoproteins (snRNPs), the building blocks of the spliceosome, and thereby plays an important role in the splicing of cellular pre-mRNAs. Most spliceosomal snRNPs contain a common set of Sm proteins SNRPB, SNRPD1, SNRPD2, SNRPD3, SNRPE, SNRPF and SNRPG that assemble in a heptameric protein ring on the Sm site of the small nuclear RNA to form the core snRNP (Sm core). In the cytosol, the Sm proteins SNRPD1, SNRPD2, SNRPE, SNRPF and SNRPG are trapped in an inactive 6S pICln-Sm complex by the chaperone CLNS1A that controls the assembly of the core snRNP. To assemble core snRNPs, the SMN complex accepts the trapped 5Sm proteins from CLNS1A forming an intermediate. Binding of snRNA inside 5Sm triggers eviction of the SMN complex, thereby allowing binding of SNRPD3 and SNRPB to complete assembly of the core snRNP. STRAP plays a role in the cellular distribution of the SMN complex. The chain is Serine-threonine kinase receptor-associated protein (STRAP) from Gallus gallus (Chicken).